Here is a 238-residue protein sequence, read N- to C-terminus: MKSFLIAIVIAVLLPVSAADFCAQWRLSKAGKYIIYNNLWNQNTATSGSQCTGVDKVSGSTVAWHTSYSWAGAPTQVKSYSNAALVFTKKQIKNIKTIPTTMKYSYSYSGTLIADVAYDLFTSSTASGSNEYEIMIWLAAYGGAGPISSTGKAIATVTINSNSFKLYKGPNGSTTVYSFVATKTITNFSADLLDFFTYLVKTQAFPSSQYLTTLEAGTEPFTGSNAKMTVSSYSAAVN.

An N-terminal signal peptide occupies residues 1-19 (MKSFLIAIVIAVLLPVSAA). Glu-133 is an active-site residue. 2 N-linked (GlcNAc...) asparagine glycosylation sites follow: Asn-171 and Asn-187. Glu-219 is an active-site residue.

It belongs to the glycosyl hydrolase 12 (cellulase H) family. Interacts with host apoplastic glucanase inhibitor GIP2.

It is found in the secreted. Its function is as follows. Non-functional secreted XEG1-like protein that binds to host Nicotiana benthamiana apoplastic glucanase inhibitor protein GIP2 more tightly than does XEG1, thus it outcompetes XEG1 for GIP2 binding and frees functional XEG1 to support P.parasitica infection. With XEG1, is required to elevate apoplastic sugar during P.parasitica infection. This is Inactive glycoside hydrolase XLP1 from Phytophthora nicotianae (strain INRA-310) (Phytophthora parasitica).